The chain runs to 72 residues: Protein kish-A (72 aa).

A signal peptide spans 1-26 (MSAIFNFQSLLTVILLLICTCAYIRS). Over 27 to 53 (LAPSLLDRNKTGLLGIFWKCARIGERK) the chain is Extracellular. A glycan (N-linked (GlcNAc...) asparagine) is linked at Asn35. A helical transmembrane segment spans residues 54 to 71 (SPYVAVCCIVMAFSILFI). Residue Gln72 is a topological domain, cytoplasmic.

The protein belongs to the KISH family.

It localises to the golgi apparatus membrane. Functionally, involved in the early part of the secretory pathway. In Bos taurus (Bovine), this protein is Protein kish-A (TMEM167A).